Here is a 227-residue protein sequence, read N- to C-terminus: Enolase-phosphatase E1 (227 aa).

This sequence belongs to the HAD-like hydrolase superfamily. MasA/MtnC family. In terms of assembly, monomer. Mg(2+) is required as a cofactor.

It catalyses the reaction 5-methylsulfanyl-2,3-dioxopentyl phosphate + H2O = 1,2-dihydroxy-5-(methylsulfanyl)pent-1-en-3-one + phosphate. Its pathway is amino-acid biosynthesis; L-methionine biosynthesis via salvage pathway; L-methionine from S-methyl-5-thio-alpha-D-ribose 1-phosphate: step 3/6. The protein operates within amino-acid biosynthesis; L-methionine biosynthesis via salvage pathway; L-methionine from S-methyl-5-thio-alpha-D-ribose 1-phosphate: step 4/6. Functionally, bifunctional enzyme that catalyzes the enolization of 2,3-diketo-5-methylthiopentyl-1-phosphate (DK-MTP-1-P) into the intermediate 2-hydroxy-3-keto-5-methylthiopentenyl-1-phosphate (HK-MTPenyl-1-P), which is then dephosphorylated to form the acireductone 1,2-dihydroxy-3-keto-5-methylthiopentene (DHK-MTPene). This is Enolase-phosphatase E1 from Pseudomonas syringae pv. syringae (strain B728a).